The chain runs to 581 residues: Pyridine nucleotide-disulfide oxidoreductase domain-containing protein 2 (581 aa).

Residue 38–71 (VVIGAGHNGLVVAAYLQRLGVNTAVFERRHVIGG) participates in FAD binding.

It belongs to the carotenoid/retinoid oxidoreductase family. Interacts with COX5B; this interaction may contribute to localize PYROXD2 to the inner face of the inner mitochondrial membrane.

The protein localises to the mitochondrion matrix. In terms of biological role, probable oxidoreductase that may play a role as regulator of mitochondrial function. This chain is Pyridine nucleotide-disulfide oxidoreductase domain-containing protein 2, found in Pongo abelii (Sumatran orangutan).